The chain runs to 368 residues: Cobalt-precorrin-5B C(1)-methyltransferase (368 aa).

It belongs to the CbiD family.

It carries out the reaction Co-precorrin-5B + S-adenosyl-L-methionine = Co-precorrin-6A + S-adenosyl-L-homocysteine. The protein operates within cofactor biosynthesis; adenosylcobalamin biosynthesis; cob(II)yrinate a,c-diamide from sirohydrochlorin (anaerobic route): step 6/10. Its function is as follows. Catalyzes the methylation of C-1 in cobalt-precorrin-5B to form cobalt-precorrin-6A. This Brucella canis (strain ATCC 23365 / NCTC 10854 / RM-666) protein is Cobalt-precorrin-5B C(1)-methyltransferase.